Consider the following 332-residue polypeptide: Galactosylgalactosylxylosylprotein 3-beta-glucuronosyltransferase 1 (332 aa).

Residues 1–6 (MPKRRD) lie on the Cytoplasmic side of the membrane. Residues 3–5 (KRR) are essential for transport from endoplasmic reticulum to Golgi apparatus and interaction with SAR1A. The chain crosses the membrane as a helical; Signal-anchor for type II membrane protein span at residues 7-27 (ILAIVLIVLPWTLLITVWHQS). Residues 28–332 (TLAPLLAVHK…KGFTDPSVEI (305 aa)) lie on the Lumenal side of the membrane. 91–93 (PTY) contacts UDP-alpha-D-glucuronate. Thr-103 and Thr-108 each carry phosphothreonine. UDP-alpha-D-glucuronate is bound at residue Asp-122. Asn-140 carries N-linked (GlcNAc...) asparagine glycosylation. UDP-alpha-D-glucuronate-binding residues include Arg-165 and Arg-170. Asn-184 carries an N-linked (GlcNAc...) asparagine glycan. 195–197 (DDD) contacts UDP-alpha-D-glucuronate. Position 197 (Asp-197) interacts with Mn(2+). The interaction with galactose moiety of substrate glycoprotein stretch occupies residues 243–252 (FDPHRPFAID). Catalysis depends on Glu-282, which acts as the Proton donor/acceptor. Asn-301 carries an N-linked (GlcNAc...) asparagine glycan. 309–311 (HTR) lines the UDP-alpha-D-glucuronate pocket.

Belongs to the glycosyltransferase 43 family. In terms of assembly, homodimer. Interacts with SAR1A. Mn(2+) serves as cofactor. In terms of processing, the soluble form derives from the membrane form by proteolytic processing.

The protein localises to the golgi apparatus membrane. Its subcellular location is the secreted. It catalyses the reaction 3-O-(beta-D-galactosyl-(1-&gt;3)-beta-D-galactosyl-(1-&gt;4)-beta-D-xylosyl)-L-seryl-[protein] + UDP-alpha-D-glucuronate = 3-O-(beta-D-GlcA-(1-&gt;3)-beta-D-Gal-(1-&gt;3)-beta-D-Gal-(1-&gt;4)-beta-D-Xyl)-L-seryl-[protein] + UDP + H(+). The protein operates within protein modification; protein glycosylation. In terms of biological role, involved in the biosynthesis of L2/HNK-1 carbohydrate epitope on glycoproteins. Can also play a role in glycosaminoglycan biosynthesis. Substrates include asialo-orosomucoid (ASOR), asialo-fetuin, and asialo-neural cell adhesion molecule. Requires sphingomyelin for activity: stearoyl-sphingomyelin was the most effective, followed by palmitoyl-sphingomyelin and lignoceroyl-sphingomyelin. Activity was demonstrated only for sphingomyelin with a saturated fatty acid and not for that with an unsaturated fatty acid, regardless of the length of the acyl group. In Pan troglodytes (Chimpanzee), this protein is Galactosylgalactosylxylosylprotein 3-beta-glucuronosyltransferase 1.